An 868-amino-acid polypeptide reads, in one-letter code: Sporulation-specific protein 75 (868 aa).

Residues 1-34 (MNATKELTFNLLNKFQDKERFGSAQRHAGISLKG) lie on the Extracellular side of the membrane. N-linked (GlcNAc...) asparagine glycosylation is present at Asn-2. A helical transmembrane segment spans residues 35–55 (FISGILFSFLYFLFQLSLFII). Residues 56–127 (LRSRFKTIYQ…DNYLFLRFLK (72 aa)) lie on the Cytoplasmic side of the membrane. A helical membrane pass occupies residues 128–148 (LLIFFFAVLSIINIPILIPIH). Residues 149–187 (YFSRDILKENEGERYEQSFRTTSKLDKWTMSNLSPNSSN) lie on the Extracellular side of the membrane. The N-linked (GlcNAc...) asparagine glycan is linked to Asn-184. A helical transmembrane segment spans residues 188-208 (TLICHLFLSIFVVLWFHFILS). The Cytoplasmic segment spans residues 209–481 (SELRFVNRLG…AKYFSANILR (273 aa)). A helical membrane pass occupies residues 482 to 502 (IFVIIGWILPVAFLGLISQIP). Residue Asn-503 is glycosylated (N-linked (GlcNAc...) asparagine). The Extracellular portion of the chain corresponds to 503–527 (NISSLIPFTKIIHFQSPFIREVAKN). The helical transmembrane segment at 528-548 (LIPIVTLIIIIEIVPYFFRWL) threads the bilayer. Residues 549–569 (SYLRGLKTGAQIEADVQNWYF) are Cytoplasmic-facing. The helical transmembrane segment at 570–590 (VFVFIHLFVVVTISSGFSIII) threads the bilayer. Over 591–611 (ERLLNNPVSIPALLANDLPKC) the chain is Extracellular. Residues 612–632 (ANFFCSFVLIRGMAYAGGNLL) traverse the membrane as a helical segment. The Cytoplasmic segment spans residues 633–660 (RIKELLFELFYYKWKRSTPHAQFKRLKT). The helical transmembrane segment at 661-683 (SLFFQLGSIYPIFSVLGCIGIIY) threads the bilayer. Topologically, residues 684–692 (SVVAPIILL) are extracellular. Residues 693 to 713 (LCCISFSMVFFSFSYLFKYQY) traverse the membrane as a helical segment. Residues 714–730 (NKENYSETFGKLYIQAL) lie on the Cytoplasmic side of the membrane. The helical transmembrane segment at 731-751 (MQLYAGIYFMEFCLLGLFTLF) threads the bilayer. Residues 752 to 753 (DQ) are Extracellular-facing. Residues 754–774 (YTLSTIMLVVFALTVITHSKI) form a helical membrane-spanning segment. At 775–868 (SKQIKSKPQR…DCHLENSHLH (94 aa)) the chain is on the cytoplasmic side.

The protein belongs to the CSC1 (TC 1.A.17) family.

The protein localises to the membrane. Functionally, acts as an osmosensitive calcium-permeable cation channel. Required for spore wall assembly and ascus formation. The chain is Sporulation-specific protein 75 (SPO75) from Saccharomyces cerevisiae (strain ATCC 204508 / S288c) (Baker's yeast).